An 841-amino-acid chain; its full sequence is Phosphatidylglycerol lysyltransferase (841 aa).

Residues 1–8 (MTKELRSK) are Cytoplasmic-facing. The chain crosses the membrane as a helical span at residues 9–29 (LFTILKIAFALTLFTIVAITL). Over 30–52 (YKELSHINLKDAIKSFSKINRFW) the chain is Extracellular. The chain crosses the membrane as a helical span at residues 53–73 (LVALFLSGGASIIVLSIYDVI). Residues 74 to 89 (LAKTLKLKIGLAKTIR) lie on the Cytoplasmic side of the membrane. The chain crosses the membrane as a helical span at residues 90 to 110 (IGYIVNALNAVVGFGGFIGAS). Residues 111 to 129 (VRFLFYKNTTDDKKALFHT) lie on the Extracellular side of the membrane. A helical transmembrane segment spans residues 130 to 150 (ISIVLISMLTGLSLLSILVVI). Topologically, residues 151 to 164 (HVFDISHIFTPYPW) are cytoplasmic. Residues 165–185 (VKWLMYVVALFLPIFVVFTII) form a helical membrane-spanning segment. Topologically, residues 186 to 193 (KPVQKTHR) are extracellular. The helical transmembrane segment at 194–216 (LLGVYCTIVSGVEWFVAALVLYM) threads the bilayer. The Cytoplasmic segment spans residues 217-229 (SMAIVGVQIPFAT). A helical membrane pass occupies residues 230–250 (FMGIFILAALSGLISFIPGGF). Residues 251–270 (GTFDLVVLLGLKALNVNEEA) lie on the Extracellular side of the membrane. Residues 271-291 (IVLGLSLYRFAYYLFPVLIAL) traverse the membrane as a helical segment. The Cytoplasmic portion of the chain corresponds to 292-336 (ILSTFEFRSTAKRYWEDSRILVPVKDMTSLLGSYQKDIIARIPSF). The helical transmembrane segment at 337-357 (AIALLLLFTSLVFFLNNLTII) threads the bilayer. Topologically, residues 358–367 (YDGLYDPNHY) are extracellular. The chain crosses the membrane as a helical span at residues 368–388 (IYYIIVSIHTCACLLLLLNVI). The Cytoplasmic portion of the chain corresponds to 389-392 (GVYK). Residues 393 to 413 (LSKRAILFSIISVLFIFIATA) form a helical membrane-spanning segment. Residues 414–415 (YT) lie on the Extracellular side of the membrane. The helical transmembrane segment at 416–436 (YASFILLSWLTVIFILLLVFY) threads the bilayer. At 437–448 (RRARVIKRPFRY) the chain is on the cytoplasmic side. Residues 449–469 (SKLLLSVITGAIILYINHLVI) form a helical membrane-spanning segment. Over 470-489 (KSTFYSLEIYHIEMLTSILR) the chain is Extracellular. Residues 490-510 (YYFWITILLVAIIVGVIVWWF) form a helical membrane-spanning segment. The Cytoplasmic segment spans residues 511 to 841 (EYRYRSSNSR…KVMRVIRKNN (331 aa)).

Belongs to the LPG synthase family.

It localises to the cell membrane. It catalyses the reaction L-lysyl-tRNA(Lys) + a 1,2-diacyl-sn-glycero-3-phospho-(1'-sn-glycerol) = a 1,2-diacyl-sn-glycero-3-phospho-1'-(3'-O-L-lysyl)-sn-glycerol + tRNA(Lys). Functionally, catalyzes the transfer of a lysyl group from L-lysyl-tRNA(Lys) to membrane-bound phosphatidylglycerol (PG), which produces lysylphosphatidylglycerol (LPG), a major component of the bacterial membrane with a positive net charge. LPG synthesis contributes to bacterial virulence as it is involved in the resistance mechanism against cationic antimicrobial peptides (CAMP) produces by the host's immune system (defensins, cathelicidins) and by the competing microorganisms (bacteriocins). In fact, the modification of anionic phosphatidylglycerol with positively charged L-lysine results in repulsion of the peptides. The protein is Phosphatidylglycerol lysyltransferase (mprF) of Staphylococcus xylosus.